A 349-amino-acid chain; its full sequence is Succinylglutamate desuccinylase (349 aa).

Zn(2+)-binding residues include histidine 70, glutamate 73, and histidine 166. Glutamate 229 is a catalytic residue.

Belongs to the AspA/AstE family. Succinylglutamate desuccinylase subfamily. The cofactor is Zn(2+).

It catalyses the reaction N-succinyl-L-glutamate + H2O = L-glutamate + succinate. The protein operates within amino-acid degradation; L-arginine degradation via AST pathway; L-glutamate and succinate from L-arginine: step 5/5. In terms of biological role, transforms N(2)-succinylglutamate into succinate and glutamate. The chain is Succinylglutamate desuccinylase from Burkholderia mallei (strain ATCC 23344).